Consider the following 33-residue polypeptide: Alpha-amanitin proprotein (33 aa).

Residues 1–10 (MSDINATRLP) constitute a propeptide that is removed on maturation. Isoleucine 11 bears the (3R,4R)-4,5-dihydroxyisoleucine; in form alpha-amanitin mark. The residue at position 11 (isoleucine 11) is a (3R,4S)-4-hydroxyisoleucine; in form gamma-amanitin. Positions 11–18 (IWGIGCNP) form a cross-link, cyclopeptide (Ile-Pro). The 2'-cysteinyl-6'-hydroxytryptophan sulfoxide (Trp-Cys) cross-link spans 12–16 (WGIGC). Residue proline 18 is modified to 4-hydroxyproline. A propeptide spanning residues 19–33 (SVGDEVTALLASGEA) is cleaved from the precursor.

It belongs to the MSDIN fungal toxin family. In terms of processing, processed by the macrocyclase-peptidase enzyme POPB to yield a toxic cyclic decapeptide. POPB first removes 10 residues from the N-terminus. Conformational trapping of the remaining peptide forces the enzyme to release this intermediate rather than proceed to macrocyclization. The enzyme rebinds the remaining peptide in a different conformation and catalyzes macrocyclization of the N-terminal 8 residues.

Major toxin belonging to the bicyclic octapeptides amatoxins that acts by binding non-competitively to RNA polymerase II and greatly slowing the elongation of transcripts from target promoters. This is Alpha-amanitin proprotein from Amanita rimosa.